Consider the following 186-residue polypeptide: Sec-independent protein translocase protein TatB (186 aa).

The chain crosses the membrane as a helical span at residues 1–21 (MFDIGFSELILLMVLGLVVLG). The tract at residues 162-186 (LSSYYPPDDIEIAPASKSQSSKTKS) is disordered. The segment covering 177-186 (SKSQSSKTKS) has biased composition (polar residues).

The protein belongs to the TatB family. In terms of assembly, the Tat system comprises two distinct complexes: a TatABC complex, containing multiple copies of TatA, TatB and TatC subunits, and a separate TatA complex, containing only TatA subunits. Substrates initially bind to the TatABC complex, which probably triggers association of the separate TatA complex to form the active translocon.

The protein resides in the cell inner membrane. Part of the twin-arginine translocation (Tat) system that transports large folded proteins containing a characteristic twin-arginine motif in their signal peptide across membranes. Together with TatC, TatB is part of a receptor directly interacting with Tat signal peptides. TatB may form an oligomeric binding site that transiently accommodates folded Tat precursor proteins before their translocation. The sequence is that of Sec-independent protein translocase protein TatB from Haemophilus influenzae (strain 86-028NP).